We begin with the raw amino-acid sequence, 187 residues long: UPF0301 protein KPN78578_33170 (187 aa).

This sequence belongs to the UPF0301 (AlgH) family.

This is UPF0301 protein KPN78578_33170 from Klebsiella pneumoniae subsp. pneumoniae (strain ATCC 700721 / MGH 78578).